Consider the following 504-residue polypeptide: Putative lipase ATG15 (504 aa).

Met-1 is a topological domain (cytoplasmic). The chain crosses the membrane as a helical; Signal-anchor for type II membrane protein span at residues 2–22 (LGRQVTMLLKVIVAVAVLFVW). The Lumenal portion of the chain corresponds to 23 to 504 (HRSRDSSRGD…WLGICTDYGV (482 aa)). Residue Asn-183 is glycosylated (N-linked (GlcNAc...) asparagine). Ser-313 (charge relay system) is an active-site residue. The interval 458–484 (EESSSSIASSSQLTSSHSESETLTSTD) is disordered. A compositionally biased stretch (low complexity) spans 461–483 (SSSIASSSQLTSSHSESETLTST).

This sequence belongs to the AB hydrolase superfamily. Lipase family. Binds to both phosphatidylinositol (PI) and phosphatidylinositol 3,5-bisphosphate (PIP2).

The protein resides in the endosome. Its subcellular location is the multivesicular body membrane. The protein localises to the prevacuolar compartment membrane. It carries out the reaction a triacylglycerol + H2O = a diacylglycerol + a fatty acid + H(+). Lipase which is essential for lysis of subvacuolar cytoplasm to vacuole targeted bodies and intravacuolar autophagic bodies. Involved in the lysis of intravacuolar multivesicular body (MVB) vesicles. The intravacuolar membrane disintegration by ATG15 is critical to life span extension. In Candida glabrata (strain ATCC 2001 / BCRC 20586 / JCM 3761 / NBRC 0622 / NRRL Y-65 / CBS 138) (Yeast), this protein is Putative lipase ATG15 (ATG15).